Here is a 218-residue protein sequence, read N- to C-terminus: Octanoyltransferase (218 aa).

The 174-residue stretch at 45-218 folds into the BPL/LPL catalytic domain; sequence AGTADELWLL…TDALQRAIYS (174 aa). Substrate-binding positions include 84-91, 151-153, and 164-166; these read RGGQITYH, ALG, and GLA. C182 functions as the Acyl-thioester intermediate in the catalytic mechanism.

This sequence belongs to the LipB family.

The protein localises to the cytoplasm. It carries out the reaction octanoyl-[ACP] + L-lysyl-[protein] = N(6)-octanoyl-L-lysyl-[protein] + holo-[ACP] + H(+). It participates in protein modification; protein lipoylation via endogenous pathway; protein N(6)-(lipoyl)lysine from octanoyl-[acyl-carrier-protein]: step 1/2. In terms of biological role, catalyzes the transfer of endogenously produced octanoic acid from octanoyl-acyl-carrier-protein onto the lipoyl domains of lipoate-dependent enzymes. Lipoyl-ACP can also act as a substrate although octanoyl-ACP is likely to be the physiological substrate. This Thiobacillus denitrificans (strain ATCC 25259 / T1) protein is Octanoyltransferase.